A 407-amino-acid chain; its full sequence is MQTLSAPDISSSKPAALTEATIVRRKTRPVPVGSITIGGGNPVVVQSMINEDTLDIEGSVAAIRRLHEIGCEIVRVTVPSMAHAKAMAEIRAKLHRTYKPVPLVADVHHNGLKIALEVANHVDNVRINPGLYVFEKPKADRTEYTQAEFDEIGAKIRETLEPLVLSLKTQNKSMRIGVNHGSLAERMLFTYGDTPEGMVESALEFIRICESLGYYHLEISLKASRVPVMLAANRLMVQRMDELGMDYPLHLGVTEAGDGEYGRIKSTAGIGTLLAEGIGDTIRVSLTEAPEKEIPVCYSILQALGLRKTMVEYVACPSCGRTLFNLEEVLHKVREATKHLTGLDIAVMGCIVNGPGEMADADYGYVGKQAGHISLYRGREEVKKVPEDQGVEELINLIKADGRWVDP.

Cys316, Cys319, Cys350, and Glu357 together coordinate [4Fe-4S] cluster.

It belongs to the IspG family. The cofactor is [4Fe-4S] cluster.

The catalysed reaction is (2E)-4-hydroxy-3-methylbut-2-enyl diphosphate + 2 oxidized [2Fe-2S]-[ferredoxin] + H2O = 2-C-methyl-D-erythritol 2,4-cyclic diphosphate + 2 reduced [2Fe-2S]-[ferredoxin] + H(+). Its pathway is isoprenoid biosynthesis; isopentenyl diphosphate biosynthesis via DXP pathway; isopentenyl diphosphate from 1-deoxy-D-xylulose 5-phosphate: step 5/6. Its function is as follows. Converts 2C-methyl-D-erythritol 2,4-cyclodiphosphate (ME-2,4cPP) into 1-hydroxy-2-methyl-2-(E)-butenyl 4-diphosphate. The polypeptide is 4-hydroxy-3-methylbut-2-en-1-yl diphosphate synthase (ferredoxin) (Cyanothece sp. (strain PCC 7425 / ATCC 29141)).